A 423-amino-acid chain; its full sequence is Gamma-glutamyl phosphate reductase (423 aa).

Belongs to the gamma-glutamyl phosphate reductase family.

It is found in the cytoplasm. It catalyses the reaction L-glutamate 5-semialdehyde + phosphate + NADP(+) = L-glutamyl 5-phosphate + NADPH + H(+). The protein operates within amino-acid biosynthesis; L-proline biosynthesis; L-glutamate 5-semialdehyde from L-glutamate: step 2/2. In terms of biological role, catalyzes the NADPH-dependent reduction of L-glutamate 5-phosphate into L-glutamate 5-semialdehyde and phosphate. The product spontaneously undergoes cyclization to form 1-pyrroline-5-carboxylate. The polypeptide is Gamma-glutamyl phosphate reductase (Paracoccus denitrificans (strain Pd 1222)).